The chain runs to 466 residues: 55 kDa erythrocyte membrane protein (466 aa).

T2 is modified (N-acetylthreonine). Phosphoserine is present on residues S13 and S19. Phosphothreonine is present on T49. Phosphoserine occurs at positions 52, 57, and 110. The region spanning 71–152 (LIQIEKVTEE…MISLKVIPNQ (82 aa)) is the PDZ domain. Residues 158-228 (ALQMFMRAQF…PSPELQEWRV (71 aa)) enclose the SH3 domain. A Phosphoserine modification is found at S243. Residues 268–466 (VVSYEEVVRL…PQWVPVSWVY (199 aa)) form an interaction with PALS1 region. One can recognise a Guanylate kinase-like domain in the interval 282-451 (RKTLVLIGAS…TLKKLQEAFD (170 aa)).

The protein belongs to the MAGUK family. As to quaternary structure, heterodimer with PALS1. Interacts with DLG5 and NF2. Interacts (via guanylate kinase-like domain) with WHRN (via third PDZ domain). In terms of processing, palmitoylated.

It localises to the cell membrane. Its subcellular location is the cell projection. It is found in the stereocilium. In terms of biological role, essential regulator of neutrophil polarity. Regulates neutrophil polarization by regulating AKT1 phosphorylation through a mechanism that is independent of PIK3CG activity. The polypeptide is 55 kDa erythrocyte membrane protein (MPP1) (Papio anubis (Olive baboon)).